The primary structure comprises 124 residues: Ribonuclease pancreatic (124 aa).

Residues 1–13 (KESAAAKFERQHM) are compositionally biased toward basic and acidic residues. A disordered region spans residues 1–24 (KESAAAKFERQHMDSSTSSASSSN). Residues Lys-7 and Arg-10 each coordinate substrate. His-12 (proton acceptor) is an active-site residue. 4 cysteine pairs are disulfide-bonded: Cys-26/Cys-84, Cys-40/Cys-95, Cys-58/Cys-110, and Cys-65/Cys-72. Asn-34 is a glycosylation site (N-linked (GlcNAc...) asparagine; partial). Residues 41–45 (KPVNT), Lys-66, and Arg-85 contribute to the substrate site. The active-site Proton donor is His-119.

This sequence belongs to the pancreatic ribonuclease family. Monomer. Interacts with and forms tight 1:1 complexes with RNH1. Dimerization of two such complexes may occur. Interaction with RNH1 inhibits this protein. As to expression, pancreas.

It is found in the secreted. It carries out the reaction an [RNA] containing cytidine + H2O = an [RNA]-3'-cytidine-3'-phosphate + a 5'-hydroxy-ribonucleotide-3'-[RNA].. The enzyme catalyses an [RNA] containing uridine + H2O = an [RNA]-3'-uridine-3'-phosphate + a 5'-hydroxy-ribonucleotide-3'-[RNA].. Endonuclease that catalyzes the cleavage of RNA on the 3' side of pyrimidine nucleotides. Acts on single-stranded and double-stranded RNA. This chain is Ribonuclease pancreatic (RNASE1), found in Ovis aries (Sheep).